We begin with the raw amino-acid sequence, 440 residues long: Aclacinomycin-T 2-deoxy-L-fucose transferase (440 aa).

The catalysed reaction is dTDP-2-deoxy-beta-L-fucose + aclacinomycin T = aclacinomycin S + dTDP + H(+). Its function is as follows. Involved in the biosynthesis of the trisaccharide moiety characteristic of the antitumor drug aclacinomycins. In the first reaction, AknK catalyzes the transfer of 2-deoxy-beta-L-fucose from the activated donor dTDP-2-deoxy-beta-L-fucose to the mono-glycosylated aclacinomycin T (rhodosaminyl aklavinone), forming the di-glycosylated aclacinomycin S (L-2-deoxyfucosyl-L-rhodosaminyl aklavinone). It can also catalyze the addition of an alternate dTDP-L-sugar, dTDP-L-daunosamine, to aclacinomycin T and the addition of 2-deoxy-beta-L-fucose to the mono-glycosylated aglycones (monoglycosylated anthracyclines) such as daunomycin (daunorubicin), adriamycin (doxorubicin) and idarubicin. In vitro, AknK also catalyzes the addition of a second L-2-deoxyfucosyl moiety from dTDP-2-deoxy-beta-L-fucose, albeit with reduced activity, to the natural disaccharide chain of aclacinomycin S to produce L-deoxyfucosyl-L-deoxyfucosyl-L-rhodosaminyl aklavinone (2-deoxy-alpha-D-fucosyl-aclacinomycin S), a variant of the natural aclacinomycin A. The polypeptide is Aclacinomycin-T 2-deoxy-L-fucose transferase (Streptomyces galilaeus).